Consider the following 519-residue polypeptide: Asteroid homolog 1 (519 aa).

This sequence belongs to the asteroid family.

It localises to the cytoplasm. The protein resides in the mitochondrion. The polypeptide is Asteroid homolog 1 (ast1) (Schizosaccharomyces pombe (strain 972 / ATCC 24843) (Fission yeast)).